A 216-amino-acid chain; its full sequence is 3-isopropylmalate dehydratase small subunit (216 aa).

Belongs to the LeuD family. LeuD type 1 subfamily. In terms of assembly, heterodimer of LeuC and LeuD.

It catalyses the reaction (2R,3S)-3-isopropylmalate = (2S)-2-isopropylmalate. Its pathway is amino-acid biosynthesis; L-leucine biosynthesis; L-leucine from 3-methyl-2-oxobutanoate: step 2/4. Its function is as follows. Catalyzes the isomerization between 2-isopropylmalate and 3-isopropylmalate, via the formation of 2-isopropylmaleate. The chain is 3-isopropylmalate dehydratase small subunit from Cupriavidus pinatubonensis (strain JMP 134 / LMG 1197) (Cupriavidus necator (strain JMP 134)).